Reading from the N-terminus, the 469-residue chain is Secreted triacylglycerol lipase LIP3 (469 aa).

An N-terminal signal peptide occupies residues 1 to 21; sequence MVSLLWKFTLLCLFLLACTSA. C121 and C292 form a disulfide bridge. The active-site Nucleophile is S205. Residue N238 is glycosylated (N-linked (GlcNAc...) asparagine). Catalysis depends on residues D352 and H386.

Belongs to the AB hydrolase superfamily. Lipase family. Class Lip subfamily.

The protein localises to the secreted. The enzyme catalyses a triacylglycerol + H2O = a diacylglycerol + a fatty acid + H(+). It carries out the reaction a monoacylglycerol + H2O = glycerol + a fatty acid + H(+). It catalyses the reaction a diacylglycerol + H2O = a monoacylglycerol + a fatty acid + H(+). Secreted lipase that hydrolyzes acylglycerol lipids such as triacylglycerols and consequently releases free fatty acid. Generates free oleic acid from the substrates mono- and diolein and hydrolyzes triolein in significant amounts. Due to an absence of fatty acid synthase genes in Malassezia species, secretory lipases are essential for the yeast to generate free fatty acids from degradation of sebum and assimilate them as lipid sources for growth. Plays an essential role at the pathogen-host interface during disease progression. Performs also the reverse reaction to build diacyl- and triacyl- glycerols from monoacylglycerols. This chain is Secreted triacylglycerol lipase LIP3, found in Malassezia restricta (strain ATCC 96810 / NBRC 103918 / CBS 7877) (Seborrheic dermatitis infection agent).